The primary structure comprises 301 residues: 2-dehydropantoate 2-reductase (301 aa).

NADP(+) contacts are provided by residues 11-16 (GAGAMG), Asn-107, and Ala-133. Asn-107 provides a ligand contact to substrate. The active-site Proton donor is the Lys-187. 4 residues coordinate substrate: Asn-191, Asn-195, Asn-205, and Ser-251. Residue Glu-263 coordinates NADP(+).

The protein belongs to the ketopantoate reductase family.

The protein resides in the cytoplasm. It catalyses the reaction (R)-pantoate + NADP(+) = 2-dehydropantoate + NADPH + H(+). The protein operates within cofactor biosynthesis; (R)-pantothenate biosynthesis; (R)-pantoate from 3-methyl-2-oxobutanoate: step 2/2. Its function is as follows. Catalyzes the NADPH-dependent reduction of ketopantoate into pantoic acid. The chain is 2-dehydropantoate 2-reductase from Listeria innocua serovar 6a (strain ATCC BAA-680 / CLIP 11262).